The sequence spans 598 residues: Elongation factor 4 (598 aa).

Residues 2-183 (KKIRNFCIIA…AIIEKIPPPK (182 aa)) form the tr-type G domain. GTP is bound by residues 14 to 19 (DHGKST) and 130 to 133 (NKVD).

The protein belongs to the TRAFAC class translation factor GTPase superfamily. Classic translation factor GTPase family. LepA subfamily.

It is found in the cell inner membrane. It catalyses the reaction GTP + H2O = GDP + phosphate + H(+). Functionally, required for accurate and efficient protein synthesis under certain stress conditions. May act as a fidelity factor of the translation reaction, by catalyzing a one-codon backward translocation of tRNAs on improperly translocated ribosomes. Back-translocation proceeds from a post-translocation (POST) complex to a pre-translocation (PRE) complex, thus giving elongation factor G a second chance to translocate the tRNAs correctly. Binds to ribosomes in a GTP-dependent manner. The polypeptide is Elongation factor 4 (Flavobacterium johnsoniae (strain ATCC 17061 / DSM 2064 / JCM 8514 / BCRC 14874 / CCUG 350202 / NBRC 14942 / NCIMB 11054 / UW101) (Cytophaga johnsonae)).